An 884-amino-acid chain; its full sequence is Alanine--tRNA ligase (884 aa).

The Zn(2+) site is built by His570, His574, Cys676, and His680.

It belongs to the class-II aminoacyl-tRNA synthetase family. The cofactor is Zn(2+).

It localises to the cytoplasm. It carries out the reaction tRNA(Ala) + L-alanine + ATP = L-alanyl-tRNA(Ala) + AMP + diphosphate. Functionally, catalyzes the attachment of alanine to tRNA(Ala) in a two-step reaction: alanine is first activated by ATP to form Ala-AMP and then transferred to the acceptor end of tRNA(Ala). Also edits incorrectly charged Ser-tRNA(Ala) and Gly-tRNA(Ala) via its editing domain. This chain is Alanine--tRNA ligase, found in Lawsonia intracellularis (strain PHE/MN1-00).